Reading from the N-terminus, the 232-residue chain is Zinc-finger homeodomain protein 5 (232 aa).

Acidic residues predominate over residues methionine 1–glycine 11. Residues methionine 1–histidine 25 are disordered. The ZF-HD dimerization-type; degenerate zinc-finger motif lies at tyrosine 40 to aspartate 86. The segment at glycine 126–glutamine 170 is disordered. A DNA-binding region (homeobox) is located at residues arginine 159–glutamine 222.

As to quaternary structure, homo- and heterodimer with other ZFHD proteins.

It is found in the nucleus. In terms of biological role, putative transcription factor. In Oryza sativa subsp. indica (Rice), this protein is Zinc-finger homeodomain protein 5 (ZHD5).